Reading from the N-terminus, the 399-residue chain is Serine/threonine-protein kinase PKZ1 (399 aa).

The tract at residues 30–50 is disordered; that stretch reads PMQCAYQTQSHSNPEGAKRGR. A Protein kinase domain is found at 92–371; it reads WQLFDQIGAG…ADQMLQHPWM (280 aa). Residues 98–106 and Lys121 each bind ATP; that span reads IGAGAFGVV. Asp219 acts as the Proton acceptor in catalysis.

Belongs to the protein kinase superfamily. CAMK Ser/Thr protein kinase family.

It catalyses the reaction L-seryl-[protein] + ATP = O-phospho-L-seryl-[protein] + ADP + H(+). The enzyme catalyses L-threonyl-[protein] + ATP = O-phospho-L-threonyl-[protein] + ADP + H(+). Its function is as follows. May regulate an early stage of the zoospore pathway. This chain is Serine/threonine-protein kinase PKZ1, found in Phytophthora infestans (strain T30-4) (Potato late blight agent).